The chain runs to 342 residues: Cathepsin B-like cysteine proteinase 2 (342 aa).

An N-terminal signal peptide occupies residues 1–18 (MKYLVLALCTYLCSQSGA). The propeptide at 19–86 (DENAAQGIPL…VKEDPDPEVD (68 aa)) is activation peptide. N-linked (GlcNAc...) asparagine glycosylation occurs at N99. Disulfide bonds link C100/C128, C111/C156, C147/C214, C148/C152, C185/C218, and C193/C205. The active site involves C114. The N-linked (GlcNAc...) asparagine glycan is linked to N138. N198 carries an N-linked (GlcNAc...) asparagine glycan. H285 is a catalytic residue. N296 is a glycosylation site (N-linked (GlcNAc...) asparagine). Residue N305 is part of the active site.

This sequence belongs to the peptidase C1 family.

Functionally, expression of the protease correlates with blood-feeding and suggests a role for the protease in blood digestion. This is Cathepsin B-like cysteine proteinase 2 (AC-2) from Haemonchus contortus (Barber pole worm).